The primary structure comprises 657 residues: 9-cis-epoxycarotenoid dioxygenase NCED9, chloroplastic (657 aa).

Histidine 357, histidine 406, histidine 471, and histidine 642 together coordinate Fe cation.

It belongs to the carotenoid oxygenase family. Requires Fe(2+) as cofactor. In terms of tissue distribution, expressed in developing siliques, embryo and endosperm.

The protein resides in the plastid. It is found in the chloroplast stroma. It carries out the reaction a 9-cis-epoxycarotenoid + O2 = a 12'-apo-carotenal + 2-cis,4-trans-xanthoxin. It catalyses the reaction 9-cis-violaxanthin + O2 = (3S,5R,6S)-5,6-epoxy-3-hydroxy-5,6-dihydro-12'-apo-beta-caroten-12'-al + 2-cis,4-trans-xanthoxin. The catalysed reaction is 9'-cis-neoxanthin + O2 = (3S,5R,6R)-3,5-dihydroxy-6,7-didehydro-5,6-dihydro-12'-apo-beta-caroten-12'-al + 2-cis,4-trans-xanthoxin. Its function is as follows. Has a 11,12(11',12') 9-cis epoxycarotenoid cleavage activity. Catalyzes the first step of abscisic-acid biosynthesis from carotenoids. Contributes probably to abscisic acid synthesis for the induction of seed dormancy. The protein is 9-cis-epoxycarotenoid dioxygenase NCED9, chloroplastic (NCED9) of Arabidopsis thaliana (Mouse-ear cress).